The following is a 429-amino-acid chain: Adenylosuccinate synthetase (429 aa).

GTP is bound by residues 12–18 and 40–42; these read GDEGKGK and GHT. Aspartate 13 (proton acceptor) is an active-site residue. Residues aspartate 13 and glycine 40 each coordinate Mg(2+). Residues 13–16, 38–41, threonine 129, arginine 143, glutamine 224, threonine 239, and arginine 303 each bind IMP; these read DEGK and NAGH. Residue histidine 41 is the Proton donor of the active site. 299–305 contacts substrate; the sequence is VTTGRAR. Residues arginine 305, 331–333, and 413–415 each bind GTP; these read KLD and GVG.

It belongs to the adenylosuccinate synthetase family. In terms of assembly, homodimer. The cofactor is Mg(2+).

Its subcellular location is the cytoplasm. The enzyme catalyses IMP + L-aspartate + GTP = N(6)-(1,2-dicarboxyethyl)-AMP + GDP + phosphate + 2 H(+). It participates in purine metabolism; AMP biosynthesis via de novo pathway; AMP from IMP: step 1/2. In terms of biological role, plays an important role in the de novo pathway of purine nucleotide biosynthesis. Catalyzes the first committed step in the biosynthesis of AMP from IMP. The protein is Adenylosuccinate synthetase of Rhodococcus erythropolis (strain PR4 / NBRC 100887).